A 227-amino-acid polypeptide reads, in one-letter code: 2-phospho-L-lactate guanylyltransferase (227 aa).

The protein belongs to the CofC family. In terms of assembly, homodimer.

It carries out the reaction (2S)-2-phospholactate + GTP + H(+) = (2S)-lactyl-2-diphospho-5'-guanosine + diphosphate. Its pathway is cofactor biosynthesis; coenzyme F420 biosynthesis. Its function is as follows. Guanylyltransferase that catalyzes the activation of (2S)-2-phospholactate (2-PL) as (2S)-lactyl-2-diphospho-5'-guanosine, via the condensation of 2-PL with GTP. It is involved in the biosynthesis of coenzyme F420, a hydride carrier cofactor. The sequence is that of 2-phospho-L-lactate guanylyltransferase from Methanocaldococcus sp. (strain FS406-22).